Here is a 292-residue protein sequence, read N- to C-terminus: MPWIQFQLEVSAGQVERLSDQLSEAGAVAVTLLDATDQPLFEPPPGETPLWSRTRVNALFPMASDPDTLLQELKQDWAPESFPSYRWEILADQNWERAWMDHFKPLRFGSQLWVCPSWLPPPEPEAVNLLLDPGLAFGTGTHPTTALCLEWLTNANLNQACIIDYGCGSGILAIAALKLGATAAVAVDHDPQALLATQENATHNGVISQLQVSSPSELIEIKADFLVANILAEPLLRLASLFARLTYPGAYLILSGITSDQIQQILQTYNNWFTFNTPMIKENWVLLAGHRR.

Thr145, Gly166, Asp188, and Asn229 together coordinate S-adenosyl-L-methionine.

Belongs to the methyltransferase superfamily. PrmA family.

It localises to the cytoplasm. The enzyme catalyses L-lysyl-[protein] + 3 S-adenosyl-L-methionine = N(6),N(6),N(6)-trimethyl-L-lysyl-[protein] + 3 S-adenosyl-L-homocysteine + 3 H(+). Functionally, methylates ribosomal protein L11. The sequence is that of Ribosomal protein L11 methyltransferase from Nitrosococcus oceani (strain ATCC 19707 / BCRC 17464 / JCM 30415 / NCIMB 11848 / C-107).